The chain runs to 401 residues: Exodeoxyribonuclease 7 large subunit (401 aa).

It belongs to the XseA family. In terms of assembly, heterooligomer composed of large and small subunits.

Its subcellular location is the cytoplasm. It catalyses the reaction Exonucleolytic cleavage in either 5'- to 3'- or 3'- to 5'-direction to yield nucleoside 5'-phosphates.. In terms of biological role, bidirectionally degrades single-stranded DNA into large acid-insoluble oligonucleotides, which are then degraded further into small acid-soluble oligonucleotides. The chain is Exodeoxyribonuclease 7 large subunit from Clostridium botulinum (strain Loch Maree / Type A3).